The following is a 789-amino-acid chain: Phenylalanine--tRNA ligase beta subunit (789 aa).

The 111-residue stretch at 39–149 (ADGLEAFRIA…HEAPVGQSYV (111 aa)) folds into the tRNA-binding domain. Residues 399–471 (SAVPVISYDP…RIEGLDNVPS (73 aa)) form the B5 domain. Mg(2+) contacts are provided by D449, D455, and D459. Positions 696-788 (SMLQPVFRDF…AAAKKGARLR (93 aa)) constitute an FDX-ACB domain.

This sequence belongs to the phenylalanyl-tRNA synthetase beta subunit family. Type 1 subfamily. Tetramer of two alpha and two beta subunits. Mg(2+) is required as a cofactor.

Its subcellular location is the cytoplasm. The enzyme catalyses tRNA(Phe) + L-phenylalanine + ATP = L-phenylalanyl-tRNA(Phe) + AMP + diphosphate + H(+). This Zymomonas mobilis subsp. mobilis (strain ATCC 31821 / ZM4 / CP4) protein is Phenylalanine--tRNA ligase beta subunit.